The chain runs to 303 residues: Trans-enoyl reductase tazE (303 aa).

Residues 1–26 (MTAEHDAAILPKPGGPLAVGKRATPE) are disordered. 44-49 (CDYYQR) serves as a coordination point for NADP(+). 136–143 (LAVLTALT) serves as a coordination point for substrate. NADP(+) contacts are provided by residues 170 to 173 (SSSV), 193 to 196 (SPKH), Y211, and 246 to 247 (LD). Residue 265–269 (VLPEC) participates in substrate binding.

It belongs to the zinc-containing alcohol dehydrogenase family.

It functions in the pathway secondary metabolite biosynthesis. Trans-enoyl reductase; part of the gene cluster that mediates the biosynthesis of azaterrilone A and other azaphilones, a class of fungal metabolites characterized by a highly oxygenated pyrano-quinone bicyclic core and exhibiting a broad range of bioactivities. The first step of the pathway begins with the non-reducing polyketide synthase tazA that assembles one acetyl-CoA starter unit, five malonyl-CoA units, and catalyzes a series of Claisen condensations, methylation, PT-mediated cyclization, and finally releases the first hexaketide precursor through the R-domain. The tazA product then undergoes reduction on its terminal ketone and the following pyran-ring formation by yet undetermined enzyme(s). Dehydration and enoyl reduction, possibly involving the trans-enoyl reductase tazE leads to the next intermediate. TazD is predicted as an acetyltransferase and might catalyze the acetylation steps leading to the synthesis of azaterrilone A. Azaterrilone A is not the final product of the taz pathway and both the highly reducing polyketide synthase tazB and the dual enzyme tazHJ catalyze late steps of the pathway, leading to the production of the 2 final stereoisomers that contain additional polyketide modification whose structures have still to be determined. This chain is Trans-enoyl reductase tazE, found in Aspergillus terreus (strain NIH 2624 / FGSC A1156).